The primary structure comprises 119 residues: NADH-quinone oxidoreductase subunit A (119 aa).

3 helical membrane-spanning segments follow: residues 7-27 (YPVL…VSIG), 63-83 (LVAI…PWGV), and 88-108 (IGWP…LGFA).

This sequence belongs to the complex I subunit 3 family. In terms of assembly, NDH-1 is composed of 14 different subunits. Subunits NuoA, H, J, K, L, M, N constitute the membrane sector of the complex.

It is found in the cell inner membrane. It catalyses the reaction a quinone + NADH + 5 H(+)(in) = a quinol + NAD(+) + 4 H(+)(out). NDH-1 shuttles electrons from NADH, via FMN and iron-sulfur (Fe-S) centers, to quinones in the respiratory chain. The immediate electron acceptor for the enzyme in this species is believed to be ubiquinone. Couples the redox reaction to proton translocation (for every two electrons transferred, four hydrogen ions are translocated across the cytoplasmic membrane), and thus conserves the redox energy in a proton gradient. This is NADH-quinone oxidoreductase subunit A from Burkholderia mallei (strain NCTC 10247).